The chain runs to 267 residues: Ribosomal RNA small subunit methyltransferase A (267 aa).

Positions 16, 18, 43, 64, 88, and 109 each coordinate S-adenosyl-L-methionine.

Belongs to the class I-like SAM-binding methyltransferase superfamily. rRNA adenine N(6)-methyltransferase family. RsmA subfamily.

It localises to the cytoplasm. The catalysed reaction is adenosine(1518)/adenosine(1519) in 16S rRNA + 4 S-adenosyl-L-methionine = N(6)-dimethyladenosine(1518)/N(6)-dimethyladenosine(1519) in 16S rRNA + 4 S-adenosyl-L-homocysteine + 4 H(+). In terms of biological role, specifically dimethylates two adjacent adenosines (A1518 and A1519) in the loop of a conserved hairpin near the 3'-end of 16S rRNA in the 30S particle. May play a critical role in biogenesis of 30S subunits. The protein is Ribosomal RNA small subunit methyltransferase A of Acidithiobacillus ferrooxidans (strain ATCC 23270 / DSM 14882 / CIP 104768 / NCIMB 8455) (Ferrobacillus ferrooxidans (strain ATCC 23270)).